A 445-amino-acid chain; its full sequence is Xylose isomerase (445 aa).

Residues H107 and D110 contribute to the active site. Residues E238, E274, H277, D302, D313, D315, and D345 each contribute to the Mg(2+) site.

Belongs to the xylose isomerase family. In terms of assembly, homotetramer. Mg(2+) is required as a cofactor.

The protein localises to the cytoplasm. It catalyses the reaction alpha-D-xylose = alpha-D-xylulofuranose. The chain is Xylose isomerase (xylA) from Priestia megaterium (strain DSM 319 / IMG 1521) (Bacillus megaterium).